The following is a 141-amino-acid chain: Nucleoside triphosphatase NudI (141 aa).

Residues 1 to 141 (MRQRTIVCPI…RLTFTQKGLL (141 aa)) enclose the Nudix hydrolase domain. A Nudix box motif is present at residues 38–59 (GGMEPGETMEEALRREIREELG).

Belongs to the Nudix hydrolase family. NudI subfamily. Monomer. It depends on Mg(2+) as a cofactor.

It catalyses the reaction a ribonucleoside 5'-triphosphate + H2O = a ribonucleoside 5'-phosphate + diphosphate + H(+). The catalysed reaction is a 2'-deoxyribonucleoside 5'-triphosphate + H2O = a 2'-deoxyribonucleoside 5'-phosphate + diphosphate + H(+). The enzyme catalyses dUTP + H2O = dUMP + diphosphate + H(+). It carries out the reaction dTTP + H2O = dTMP + diphosphate + H(+). It catalyses the reaction dCTP + H2O = dCMP + diphosphate + H(+). Its function is as follows. Catalyzes the hydrolysis of nucleoside triphosphates, with a preference for pyrimidine deoxynucleoside triphosphates (dUTP, dTTP and dCTP). This Enterobacter sp. (strain 638) protein is Nucleoside triphosphatase NudI.